The chain runs to 239 residues: tRNA (guanine-N(1)-)-methyltransferase (239 aa).

S-adenosyl-L-methionine-binding positions include G108 and 127–132 (LGDYVL).

The protein belongs to the RNA methyltransferase TrmD family. As to quaternary structure, homodimer.

Its subcellular location is the cytoplasm. The catalysed reaction is guanosine(37) in tRNA + S-adenosyl-L-methionine = N(1)-methylguanosine(37) in tRNA + S-adenosyl-L-homocysteine + H(+). Its function is as follows. Specifically methylates guanosine-37 in various tRNAs. In Streptococcus pneumoniae (strain P1031), this protein is tRNA (guanine-N(1)-)-methyltransferase.